A 432-amino-acid chain; its full sequence is Myb family transcription factor EFM (432 aa).

A coiled-coil region spans residues 36-81 (LEDLLSRLEQERLKIDAFKRELPLCMQLLNNAVEVYKQQLEAYRAN). Polar residues-rich tracts occupy residues 123–139 (SQSE…TDQS) and 187–197 (SPTNEHTNGQD). The interval 123–237 (SQSETKPKNI…SQSNRKARRC (115 aa)) is disordered. The segment covering 201–231 (ESMINNDNNYNNNNNNNSNSNGVSSTTSQSN) has biased composition (low complexity). In terms of domain architecture, HTH myb-type spans 230–290 (SNRKARRCWS…HLQKYRLHTR (61 aa)). Positions 261–286 (PKQIRELMKVDGLTNDEVKSHLQKYR) form a DNA-binding region, H-T-H motif. The interval 354–412 (FYTTPPPPQPLHHHHFQTFNGSSGGTASTDSTHHQVTDSPTVEGKSPESGGGERKGLAA) is disordered.

As to quaternary structure, interacts with JMJ30, but not with SVP, FLC or CO. In terms of tissue distribution, specifically expressed in vascular tissues of cotyledons, rosette leaves and cauline leaves. Not detected in the vegetative shoot apical meristem.

Its subcellular location is the nucleus. Transcription factor acting as a flowering repressor, directly repressing FT expression in a dosage-dependent manner in the leaf vasculature. The protein is Myb family transcription factor EFM of Arabidopsis thaliana (Mouse-ear cress).